Consider the following 1316-residue polypeptide: Serine/threonine-protein kinase 36 (1316 aa).

The region spanning 4 to 254 (YHVLEMIGEG…WPDLLHHPFI (251 aa)) is the Protein kinase domain. ATP-binding positions include 10-18 (IGEGSFGRV) and K33. The Proton acceptor role is filled by D125. A disordered region spans residues 389–418 (QGFPEPRPEAMGRQSTDVVDPENEEPDSDD). Residues 407–418 (VDPENEEPDSDD) show a composition bias toward acidic residues.

Belongs to the protein kinase superfamily. Ser/Thr protein kinase family. As to quaternary structure, interacts with SPAG16 and KIF27. It depends on Mg(2+) as a cofactor. Weakly expressed in the heart and thymus, present at moderate to high levels in the lungs, pancreas, and kidneys and at higher levels in the brain and cerebellum. Very highly expressed in the testis.

The protein localises to the cytoplasm. Its subcellular location is the nucleus. It localises to the cytoskeleton. The protein resides in the cilium axoneme. The catalysed reaction is L-seryl-[protein] + ATP = O-phospho-L-seryl-[protein] + ADP + H(+). It catalyses the reaction L-threonyl-[protein] + ATP = O-phospho-L-threonyl-[protein] + ADP + H(+). Its function is as follows. Serine/threonine protein kinase which plays an important role in the sonic hedgehog (Shh) pathway by regulating the activity of GLI transcription factors. Controls the activity of the transcriptional regulators GLI1, GLI2 and GLI3 by opposing the effect of SUFU and promoting their nuclear localization. GLI2 requires an additional function of STK36 to become transcriptionally active, but the enzyme does not need to possess an active kinase catalytic site for this to occur. Required for postnatal development, possibly by regulating the homeostasis of cerebral spinal fluid or ciliary function. Essential for construction of the central pair apparatus of motile cilia. In Mus musculus (Mouse), this protein is Serine/threonine-protein kinase 36.